The chain runs to 549 residues: MFWLCLVCLSVSHKMIGLCYLLVAILSGFVGYVYSLFIRLELSLIGCGILFGDYQFYNVLITSHGLIMVFAFIMPVMMGGLVNYFIPVMAGFPDMVFPRLNNMSFWMYLAGFGCVVNGFLTEEGMGVGWTLYPTLICIDFHSSLACDFVMFAVHLLGISSILNSINLLGTLFCCRRKFFSFLSWSLFIWAALITAILLIITLPVLAGGVTLILCDRNFNTSFYDVVGGGDLILFQHIFWFFGHPEVYIILLPVFGLISTIVEVIGFRCVFSTVAMIYSMILIAILGMFVWAHHMFVVGMDVDSRAYFGGVSILIGLPTCVKLFNWIYSFLYTDMIITFEVYFVIMFIFMFLIGAVTGLFLSNVGIDIMLHDTYFVVGHFHYVLSLGAVVGFFTGFIHFLAKWLPIELYLFWMFYFISTLFIGSNMLFFPMHSLGMYAFPRRISDYPVSFLFWSSFMLYGMLLLASLILFLCALFCVFLFWDYCLFFVSLFVFSLYCFFYFSTWLPCVMVLYLLLVDFAHIVLDYLFLILCFCFVFFIFFWQSLFLFFYI.

Residues 18–38 (LCYLLVAILSGFVGYVYSLFI) form a helical membrane-spanning segment. The Ca(2+) site is built by E41 and G46. A helical membrane pass occupies residues 42-62 (LSLIGCGILFGDYQFYNVLIT). H64 is a binding site for Fe(II)-heme a. Transmembrane regions (helical) follow at residues 66-86 (LIMVFAFIMPVMMGGLVNYFI), 100-120 (LNNMSFWMYLAGFGCVVNGFL), 148-168 (FVMFAVHLLGISSILNSINLL), 186-206 (LFIWAALITAILLIITLPVLA), and 222-242 (FYDVVGGGDLILFQHIFWFFG). H243 provides a ligand contact to Cu cation. Positions 243–247 (HPEVY) form a cross-link, 1'-histidyl-3'-tyrosine (His-Tyr). A run of 2 helical transmembrane segments spans residues 246–266 (VYIILLPVFGLISTIVEVIGF) and 269–289 (VFSTVAMIYSMILIAILGMFV). Y247 serves as a coordination point for O2. Positions 292 and 293 each coordinate Cu cation. A run of 2 helical transmembrane segments spans residues 306–326 (YFGGVSILIGLPTCVKLFNWI) and 340–360 (VYFVIMFIFMFLIGAVTGLFL). Residues H370 and D371 each coordinate Mg(2+). H378 provides a ligand contact to heme a3. The next 5 helical transmembrane spans lie at 379–399 (FHYVLSLGAVVGFFTGFIHFL), 402–422 (WLPIELYLFWMFYFISTLFIG), 460–480 (MLLLASLILFLCALFCVFLFW), 484–504 (LFFVSLFVFSLYCFFYFSTWL), and 520–540 (IVLDYLFLILCFCFVFFIFFW). Residue H380 coordinates Fe(II)-heme a.

It belongs to the heme-copper respiratory oxidase family. As to quaternary structure, component of the cytochrome c oxidase (complex IV, CIV), a multisubunit enzyme composed of a catalytic core of 3 subunits and several supernumerary subunits. The complex exists as a monomer or a dimer and forms supercomplexes (SCs) in the inner mitochondrial membrane with ubiquinol-cytochrome c oxidoreductase (cytochrome b-c1 complex, complex III, CIII). It depends on heme as a cofactor. Requires Cu cation as cofactor.

It localises to the mitochondrion inner membrane. It carries out the reaction 4 Fe(II)-[cytochrome c] + O2 + 8 H(+)(in) = 4 Fe(III)-[cytochrome c] + 2 H2O + 4 H(+)(out). It participates in energy metabolism; oxidative phosphorylation. Functionally, component of the cytochrome c oxidase, the last enzyme in the mitochondrial electron transport chain which drives oxidative phosphorylation. The respiratory chain contains 3 multisubunit complexes succinate dehydrogenase (complex II, CII), ubiquinol-cytochrome c oxidoreductase (cytochrome b-c1 complex, complex III, CIII) and cytochrome c oxidase (complex IV, CIV), that cooperate to transfer electrons derived from NADH and succinate to molecular oxygen, creating an electrochemical gradient over the inner membrane that drives transmembrane transport and the ATP synthase. Cytochrome c oxidase is the component of the respiratory chain that catalyzes the reduction of oxygen to water. Electrons originating from reduced cytochrome c in the intermembrane space (IMS) are transferred via the dinuclear copper A center (CU(A)) of subunit 2 and heme A of subunit 1 to the active site in subunit 1, a binuclear center (BNC) formed by heme A3 and copper B (CU(B)). The BNC reduces molecular oxygen to 2 water molecules using 4 electrons from cytochrome c in the IMS and 4 protons from the mitochondrial matrix. This is Cytochrome c oxidase subunit 1 (COI) from Leishmania tarentolae (Sauroleishmania tarentolae).